A 291-amino-acid chain; its full sequence is MIPIQLTVFFMIIYVLESLTIIVQSSLIVAVLGREWLQVRRLMPVDMILISLGISRFCLQWASMLNNFCSYLNLNYVLCNLTITWEFFNILTFWLNSLLTVFYCIKVSSFTHHIFLWVRWRILRWFPWILLGSLTIACVTIIPSAIGNYIQIQLLTMEHLPRNSTVTDRLEKFHQYQFQSHTVALVIPFILFLASTILLMASLTKQIQHHSTGHCNPSMKAHFTALRSLAILFIVFTSYFLIILITIIGTLFDKRCWLWVWEAFVYAFILMHSTSLMLSSPTLKRILKGKC.

Methionine 1 is a topological domain (extracellular). The helical transmembrane segment at 2–22 (IPIQLTVFFMIIYVLESLTII) threads the bilayer. The Cytoplasmic segment spans residues 23–41 (VQSSLIVAVLGREWLQVRR). Residues 42–62 (LMPVDMILISLGISRFCLQWA) form a helical membrane-spanning segment. Over 63–84 (SMLNNFCSYLNLNYVLCNLTIT) the chain is Extracellular. A glycan (N-linked (GlcNAc...) asparagine) is linked at asparagine 80. Residues 85-105 (WEFFNILTFWLNSLLTVFYCI) traverse the membrane as a helical segment. Topologically, residues 106-125 (KVSSFTHHIFLWVRWRILRW) are cytoplasmic. The helical transmembrane segment at 126–146 (FPWILLGSLTIACVTIIPSAI) threads the bilayer. Residues 147-182 (GNYIQIQLLTMEHLPRNSTVTDRLEKFHQYQFQSHT) are Extracellular-facing. Asparagine 163 carries an N-linked (GlcNAc...) asparagine glycan. Residues 183–203 (VALVIPFILFLASTILLMASL) traverse the membrane as a helical segment. Residues 204-228 (TKQIQHHSTGHCNPSMKAHFTALRS) are Cytoplasmic-facing. A helical membrane pass occupies residues 229–249 (LAILFIVFTSYFLIILITIIG). The Extracellular portion of the chain corresponds to 250-257 (TLFDKRCW). Residues 258 to 278 (LWVWEAFVYAFILMHSTSLML) traverse the membrane as a helical segment. Residues 279 to 291 (SSPTLKRILKGKC) lie on the Cytoplasmic side of the membrane.

Belongs to the G-protein coupled receptor T2R family. In terms of assembly, interacts with RTP3 and RTP4.

It is found in the cell membrane. In terms of biological role, receptor that may play a role in the perception of bitterness and is gustducin-linked. May function as a bitter taste receptor for the phytonutrient beta glucopyranosides, some of which are toxic and some of which lower the risk of cancer and cardiovascular disease. The activity of this receptor may stimulate alpha gustducin, mediate PLC-beta-2 activation and lead to the gating of TRPM5. This Pongo pygmaeus (Bornean orangutan) protein is Taste receptor type 2 member 16 (TAS2R16).